The chain runs to 217 residues: Orotidine 5'-phosphate decarboxylase (217 aa).

Substrate contacts are provided by residues aspartate 14, lysine 36, 64 to 73, serine 120, 172 to 182, glycine 197, and arginine 198; these read DFKVADIPST and PGVGAQGGNLS. The active-site Proton donor is the lysine 66.

It belongs to the OMP decarboxylase family. Type 1 subfamily. As to quaternary structure, homodimer.

It catalyses the reaction orotidine 5'-phosphate + H(+) = UMP + CO2. It functions in the pathway pyrimidine metabolism; UMP biosynthesis via de novo pathway; UMP from orotate: step 2/2. Functionally, catalyzes the decarboxylation of orotidine 5'-monophosphate (OMP) to uridine 5'-monophosphate (UMP). The polypeptide is Orotidine 5'-phosphate decarboxylase (Methanococcus maripaludis (strain DSM 14266 / JCM 13030 / NBRC 101832 / S2 / LL)).